The sequence spans 320 residues: 4-hydroxy-3-methylbut-2-enyl diphosphate reductase 2 (320 aa).

Residue cysteine 18 coordinates [4Fe-4S] cluster. Histidine 47 and histidine 81 together coordinate (2E)-4-hydroxy-3-methylbut-2-enyl diphosphate. Residues histidine 47 and histidine 81 each coordinate dimethylallyl diphosphate. Residues histidine 47 and histidine 81 each contribute to the isopentenyl diphosphate site. Residue cysteine 103 coordinates [4Fe-4S] cluster. Residue histidine 131 coordinates (2E)-4-hydroxy-3-methylbut-2-enyl diphosphate. Histidine 131 contacts dimethylallyl diphosphate. Histidine 131 contributes to the isopentenyl diphosphate binding site. Residue glutamate 133 is the Proton donor of the active site. Threonine 172 provides a ligand contact to (2E)-4-hydroxy-3-methylbut-2-enyl diphosphate. Cysteine 202 serves as a coordination point for [4Fe-4S] cluster. (2E)-4-hydroxy-3-methylbut-2-enyl diphosphate contacts are provided by serine 230, serine 231, asparagine 232, and serine 275. Dimethylallyl diphosphate is bound by residues serine 230, serine 231, asparagine 232, and serine 275. Isopentenyl diphosphate-binding residues include serine 230, serine 231, asparagine 232, and serine 275.

Belongs to the IspH family. Requires [4Fe-4S] cluster as cofactor.

The catalysed reaction is isopentenyl diphosphate + 2 oxidized [2Fe-2S]-[ferredoxin] + H2O = (2E)-4-hydroxy-3-methylbut-2-enyl diphosphate + 2 reduced [2Fe-2S]-[ferredoxin] + 2 H(+). It catalyses the reaction dimethylallyl diphosphate + 2 oxidized [2Fe-2S]-[ferredoxin] + H2O = (2E)-4-hydroxy-3-methylbut-2-enyl diphosphate + 2 reduced [2Fe-2S]-[ferredoxin] + 2 H(+). It participates in isoprenoid biosynthesis; dimethylallyl diphosphate biosynthesis; dimethylallyl diphosphate from (2E)-4-hydroxy-3-methylbutenyl diphosphate: step 1/1. The protein operates within isoprenoid biosynthesis; isopentenyl diphosphate biosynthesis via DXP pathway; isopentenyl diphosphate from 1-deoxy-D-xylulose 5-phosphate: step 6/6. Catalyzes the conversion of 1-hydroxy-2-methyl-2-(E)-butenyl 4-diphosphate (HMBPP) into a mixture of isopentenyl diphosphate (IPP) and dimethylallyl diphosphate (DMAPP). Acts in the terminal step of the DOXP/MEP pathway for isoprenoid precursor biosynthesis. The sequence is that of 4-hydroxy-3-methylbut-2-enyl diphosphate reductase 2 from Rhodopseudomonas palustris (strain ATCC BAA-98 / CGA009).